The sequence spans 183 residues: Gamma-crystallin N-B (183 aa).

Beta/gamma crystallin 'Greek key' domains are found at residues 6–46 (GKIC…RVES), 47–89 (GAWI…RPIR), 95–136 (YRME…RVFG), and 138–180 (GAWV…RRIV).

This sequence belongs to the beta/gamma-crystallin family. In terms of assembly, monomer.

In terms of biological role, crystallins are the dominant structural components of the vertebrate eye lens. The chain is Gamma-crystallin N-B (crygnb) from Danio rerio (Zebrafish).